The sequence spans 272 residues: 3-methyl-2-oxobutanoate hydroxymethyltransferase (272 aa).

Positions 42 and 86 each coordinate Mg(2+). 3-methyl-2-oxobutanoate contacts are provided by residues 42-43 (DS), Asp-86, and Lys-116. Residue Glu-118 coordinates Mg(2+). The active-site Proton acceptor is Glu-185.

This sequence belongs to the PanB family. As to quaternary structure, homodecamer; pentamer of dimers. Mg(2+) is required as a cofactor.

The protein localises to the cytoplasm. The enzyme catalyses 3-methyl-2-oxobutanoate + (6R)-5,10-methylene-5,6,7,8-tetrahydrofolate + H2O = 2-dehydropantoate + (6S)-5,6,7,8-tetrahydrofolate. It functions in the pathway cofactor biosynthesis; (R)-pantothenate biosynthesis; (R)-pantoate from 3-methyl-2-oxobutanoate: step 1/2. Catalyzes the reversible reaction in which hydroxymethyl group from 5,10-methylenetetrahydrofolate is transferred onto alpha-ketoisovalerate to form ketopantoate. The sequence is that of 3-methyl-2-oxobutanoate hydroxymethyltransferase from Prochlorococcus marinus (strain NATL1A).